The primary structure comprises 539 residues: Chaperone Ric-8A (539 aa).

This sequence belongs to the synembryn family.

It localises to the cytoplasm. It is found in the cell cortex. Its function is as follows. Chaperone that specifically binds and folds nascent G alpha proteins prior to G protein heterotrimer formation, promoting their stability and activity: folds GNAI1, GNAO1, GNA13 and GNAQ. Does not fold G(s) G-alpha proteins GNAS nor GNAL. Also acts as a guanine nucleotide exchange factor (GEF) for G alpha proteins by stimulating exchange of bound GDP for free GTP. In Xenopus tropicalis (Western clawed frog), this protein is Chaperone Ric-8A (ric8a).